Reading from the N-terminus, the 186-residue chain is NADH-ubiquinone oxidoreductase 17.8 kDa subunit, mitochondrial (186 aa).

A mitochondrion-targeting transit peptide spans 1-26 (MSSFRLGVSRVARQVRAPCVRNTRRY). Residues 22–49 (NTRRYASDSHAPADHTHSAAGHGEHHHA) are disordered. Over residues 26 to 49 (YASDSHAPADHTHSAAGHGEHHHA) the composition is skewed to basic and acidic residues. The chain crosses the membrane as a helical span at residues 58 to 78 (LGTAFYVIFGAIPAFGALYYF).

Complex I is composed of about 40 different subunits.

It is found in the mitochondrion inner membrane. The catalysed reaction is a ubiquinone + NADH + 5 H(+)(in) = a ubiquinol + NAD(+) + 4 H(+)(out). Its function is as follows. Transfer of electrons from NADH to the respiratory chain. The immediate electron acceptor for the enzyme is believed to be ubiquinone. This chain is NADH-ubiquinone oxidoreductase 17.8 kDa subunit, mitochondrial (nuo17.8), found in Neurospora crassa (strain ATCC 24698 / 74-OR23-1A / CBS 708.71 / DSM 1257 / FGSC 987).